A 1615-amino-acid polypeptide reads, in one-letter code: Mediator of RNA polymerase II transcription subunit 23 (1615 aa).

Disordered regions lie at residues 40–67 and 1230–1270; these read RQKPDESLRDPPNKSQKRVHAPNRDLPP and SSSS…NASE. Over residues 41-51 the composition is skewed to basic and acidic residues; sequence QKPDESLRDPP. A compositionally biased stretch (low complexity) spans 1230–1241; sequence SSSSNCSSRSGS.

The protein belongs to the Mediator complex subunit 23 family. Component of the Mediator complex.

It is found in the nucleus. Component of the Mediator complex, a coactivator involved in the regulated transcription of nearly all RNA polymerase II-dependent genes. Mediator functions as a bridge to convey information from gene-specific regulatory proteins to the basal RNA polymerase II transcription machinery. The Mediator complex, having a compact conformation in its free form, is recruited to promoters by direct interactions with regulatory proteins and serves for the assembly of a functional preinitiation complex with RNA polymerase II and the general transcription factors. In Arabidopsis thaliana (Mouse-ear cress), this protein is Mediator of RNA polymerase II transcription subunit 23 (MED23).